A 168-amino-acid polypeptide reads, in one-letter code: Urease accessory protein UreE (168 aa).

The segment at 145-168 is disordered; the sequence is EGGAYAAGQGGGHGPHGQHTHPHH.

It belongs to the UreE family.

The protein resides in the cytoplasm. Involved in urease metallocenter assembly. Binds nickel. Probably functions as a nickel donor during metallocenter assembly. The chain is Urease accessory protein UreE from Verminephrobacter eiseniae (strain EF01-2).